A 186-amino-acid chain; its full sequence is Probable RNA 2'-phosphotransferase (186 aa).

The protein belongs to the KptA/TPT1 family.

Removes the 2'-phosphate from RNA via an intermediate in which the phosphate is ADP-ribosylated by NAD followed by a presumed transesterification to release the RNA and generate ADP-ribose 1''-2''-cyclic phosphate (APPR&gt;P). May function as an ADP-ribosylase. This is Probable RNA 2'-phosphotransferase from Clostridium perfringens (strain SM101 / Type A).